A 349-amino-acid chain; its full sequence is Glycerol-3-phosphate dehydrogenase [NAD(P)+] (349 aa).

NADPH contacts are provided by S12, W13, and K107. Residues K107, G138, and S140 each coordinate sn-glycerol 3-phosphate. An NADPH-binding site is contributed by A142. 5 residues coordinate sn-glycerol 3-phosphate: K193, D246, S256, R257, and N258. Catalysis depends on K193, which acts as the Proton acceptor. An NADPH-binding site is contributed by R257. NADPH contacts are provided by V281 and E283.

Belongs to the NAD-dependent glycerol-3-phosphate dehydrogenase family.

The protein resides in the cytoplasm. The catalysed reaction is sn-glycerol 3-phosphate + NAD(+) = dihydroxyacetone phosphate + NADH + H(+). The enzyme catalyses sn-glycerol 3-phosphate + NADP(+) = dihydroxyacetone phosphate + NADPH + H(+). It functions in the pathway membrane lipid metabolism; glycerophospholipid metabolism. Functionally, catalyzes the reduction of the glycolytic intermediate dihydroxyacetone phosphate (DHAP) to sn-glycerol 3-phosphate (G3P), the key precursor for phospholipid synthesis. The polypeptide is Glycerol-3-phosphate dehydrogenase [NAD(P)+] (Pelotomaculum thermopropionicum (strain DSM 13744 / JCM 10971 / SI)).